A 125-amino-acid chain; its full sequence is Glycine cleavage system H protein (125 aa).

The 82-residue stretch at 23-104 (VVYIGITDYA…PYENWILKVK (82 aa)) folds into the Lipoyl-binding domain. Lys-64 is subject to N6-lipoyllysine.

This sequence belongs to the GcvH family. In terms of assembly, the glycine cleavage system is composed of four proteins: P, T, L and H. The cofactor is (R)-lipoate.

Its function is as follows. The glycine cleavage system catalyzes the degradation of glycine. The H protein shuttles the methylamine group of glycine from the P protein to the T protein. In Clostridioides difficile (strain 630) (Peptoclostridium difficile), this protein is Glycine cleavage system H protein.